A 145-amino-acid chain; its full sequence is UPF0179 protein MmarC7_0952 (145 aa).

It belongs to the UPF0179 family.

The chain is UPF0179 protein MmarC7_0952 from Methanococcus maripaludis (strain C7 / ATCC BAA-1331).